A 280-amino-acid polypeptide reads, in one-letter code: Tryptophan synthase alpha chain (280 aa).

Catalysis depends on proton acceptor residues E49 and D60.

Belongs to the TrpA family. Tetramer of two alpha and two beta chains.

It carries out the reaction (1S,2R)-1-C-(indol-3-yl)glycerol 3-phosphate + L-serine = D-glyceraldehyde 3-phosphate + L-tryptophan + H2O. It functions in the pathway amino-acid biosynthesis; L-tryptophan biosynthesis; L-tryptophan from chorismate: step 5/5. Its function is as follows. The alpha subunit is responsible for the aldol cleavage of indoleglycerol phosphate to indole and glyceraldehyde 3-phosphate. This Corynebacterium efficiens (strain DSM 44549 / YS-314 / AJ 12310 / JCM 11189 / NBRC 100395) protein is Tryptophan synthase alpha chain.